A 435-amino-acid polypeptide reads, in one-letter code: Trigger factor (435 aa).

Positions 163–248 constitute a PPIase FKBP-type domain; it reads GDTVTIDFDG…IHEIKTKELP (86 aa).

It belongs to the FKBP-type PPIase family. Tig subfamily.

Its subcellular location is the cytoplasm. The catalysed reaction is [protein]-peptidylproline (omega=180) = [protein]-peptidylproline (omega=0). Its function is as follows. Involved in protein export. Acts as a chaperone by maintaining the newly synthesized protein in an open conformation. Functions as a peptidyl-prolyl cis-trans isomerase. In Pediococcus pentosaceus (strain ATCC 25745 / CCUG 21536 / LMG 10740 / 183-1w), this protein is Trigger factor.